The primary structure comprises 327 residues: Ornithine carbamoyltransferase 2, anabolic (327 aa).

Residues Arg-109 and 136–139 (HPTQ) contribute to the carbamoyl phosphate site. Residues Asn-168, Asp-232, and 236 to 237 (SM) each bind L-ornithine. Carbamoyl phosphate contacts are provided by residues 273–274 (CL) and Arg-313.

It belongs to the aspartate/ornithine carbamoyltransferase superfamily. OTCase family. In terms of assembly, homotrimer.

Its subcellular location is the cytoplasm. It carries out the reaction carbamoyl phosphate + L-ornithine = L-citrulline + phosphate + H(+). It functions in the pathway amino-acid biosynthesis; L-arginine biosynthesis; L-arginine from L-ornithine and carbamoyl phosphate: step 1/3. Its function is as follows. Plays an important role in the survival and pathogenicity of P.syringae. Phaseolotoxin is a virulence factor that inhibits the catalysis of the host OTCase. Phaseolotoxin-producing bacteria do not suffer autointoxication because they possess the anabolic OTCase ArgK which can function even in the presence of phaseolotoxin. Reversibly catalyzes the transfer of the carbamoyl group from carbamoyl phosphate (CP) to the N(epsilon) atom of ornithine (ORN) to produce L-citrulline, which is a substrate for argininosuccinate synthetase, the enzyme involved in the final step in arginine biosynthesis. The sequence is that of Ornithine carbamoyltransferase 2, anabolic from Pseudomonas savastanoi pv. phaseolicola (Pseudomonas syringae pv. phaseolicola).